The sequence spans 89 residues: Small ribosomal subunit protein uS19 (89 aa).

It belongs to the universal ribosomal protein uS19 family.

Functionally, protein S19 forms a complex with S13 that binds strongly to the 16S ribosomal RNA. In Stenotrophomonas maltophilia (strain R551-3), this protein is Small ribosomal subunit protein uS19.